The sequence spans 1220 residues: Putative cell agglutination protein SPAPB2C8.01 (1220 aa).

The signal sequence occupies residues 1-21 (MAVSRLLILICLYSFVTFAYP). 4 N-linked (GlcNAc...) asparagine glycosylation sites follow: Asn-44, Asn-72, Asn-131, and Asn-160. 24 repeat units span residues 110–145 (NTIT…EPAA), 146–181 (GTVT…EPEA), 182–217 (GTVT…DTAA), 218–253 (GTVT…EPEA), 254–289 (GTVT…DTAA), 290–325 (GTVT…EPEA), 326–361 (GTVT…DTAA), 362–397 (GTVT…EPEA), 398–433 (GTVT…DTAA), 434–469 (GTVT…EPEA), 470–505 (GTVT…DTAA), 506–541 (GTVT…EPEA), 542–577 (GTVT…DTAA), 578–613 (GTVT…EPEA), 614–649 (GTVT…EPAA), 650–685 (GTVT…EPAA), 686–721 (GTVT…EPAA), 722–757 (GTVT…EPAA), 758–793 (GTVT…DPEA), 794–829 (GSVT…EPAA), 830–865 (GTVT…DPEA), 866–901 (GSVT…EPAA), 902–937 (GTVT…EPSG), and 938–973 (STVT…LPAP). Residues 110 to 973 (NTITTTLYSG…GTVEVILPAP (864 aa)) are 24 X 36 AA approximate tandem repeats. Asn-232 carries an N-linked (GlcNAc...) asparagine glycan. N-linked (GlcNAc...) asparagine glycosylation occurs at Asn-304. The N-linked (GlcNAc...) asparagine glycan is linked to Asn-376. Asn-448 carries N-linked (GlcNAc...) asparagine glycosylation. Asn-520 is a glycosylation site (N-linked (GlcNAc...) asparagine). N-linked (GlcNAc...) asparagine glycosylation is present at Asn-592. The 164-residue stretch at 1039–1202 (FTQPAYFGSS…YAATSYAYTA (164 aa)) folds into the PA14 domain.

It belongs to the mam3/map4 family.

It localises to the cell surface. Its function is as follows. May be involved in agglutination during conjugation or other aspects of colony formation. This chain is Putative cell agglutination protein SPAPB2C8.01, found in Schizosaccharomyces pombe (strain 972 / ATCC 24843) (Fission yeast).